A 398-amino-acid polypeptide reads, in one-letter code: DNA-directed RNA polymerase III subunit RPC4 (398 aa).

The segment at 1 to 149 is disordered; it reads MSEGNAAGEP…IKKEKRETDE (149 aa). S2 is subject to N-acetylserine. S42 carries the phosphoserine modification. Composition is skewed to basic and acidic residues over residues 66-100, 116-128, and 140-149; these read KIKEEPKEEVTMKKEKRERDRDRQREGHGRGRGRP, MMKKKGNWDKTVD, and IKKEKRETDE. Residues K68 and K78 each participate in a glycyl lysine isopeptide (Lys-Gly) (interchain with G-Cter in SUMO2) cross-link. An omega-N-methylarginine mark is found at R95, R97, and R99. Residues K141, K152, K160, K190, K199, K206, K220, K285, K302, and K396 each participate in a glycyl lysine isopeptide (Lys-Gly) (interchain with G-Cter in SUMO2) cross-link. The tract at residues 191–244 is disordered; sequence EESEEPEAKPFSAGPKEEDMEVDVPAVKVKEEPRDEEEEAKVKAPPRAARKTPG.

It belongs to the eukaryotic RPC4/POLR3D RNA polymerase subunit family. In terms of assembly, component of the RNA polymerase III complex consisting of 17 subunits: a ten-subunit horseshoe-shaped catalytic core composed of POLR3A/RPC1, POLR3B/RPC2, POLR1C/RPAC1, POLR1D/RPAC2, POLR3K/RPC10, POLR2E/RPABC1, POLR2F/RPABC2, POLR2H/RPABC3, POLR2K/RPABC4 and POLR2L/RPABC5; a mobile stalk composed of two subunits POLR3H/RPC8 and CRCP/RPC9, protruding from the core and functioning primarily in transcription initiation; and additional subunits homologous to general transcription factors of the RNA polymerase II machinery, POLR3C/RPC3-POLR3F/RPC6-POLR3G/RPC7 heterotrimer required for transcription initiation and POLR3D/RPC4-POLR3E/RPC5 heterodimer involved in both transcription initiation and termination. Sumoylation on Lys-141 can serve as a signal to mark misfolded Pol III for proteasomal degradation.

It is found in the nucleus. Functionally, DNA-dependent RNA polymerase catalyzes the transcription of DNA into RNA using the four ribonucleoside triphosphates as substrates. Specific peripheric component of RNA polymerase III (Pol III) which synthesizes small non-coding RNAs including 5S rRNA, snRNAs, tRNAs and miRNAs from at least 500 distinct genomic loci. Enables recruitment of Pol III at transcription initiation site and drives transcription initiation from both type 2 and type 3 DNA promoters. Required for efficient transcription termination and reinitiation. Pol III plays a key role in sensing and limiting infection by intracellular bacteria and DNA viruses. Acts as nuclear and cytosolic DNA sensor involved in innate immune response. Can sense non-self dsDNA that serves as template for transcription into dsRNA. The non-self RNA polymerase III transcripts, such as Epstein-Barr virus-encoded RNAs (EBERs) induce type I interferon and NF-kappa-B through the RIG-I pathway. In Mus musculus (Mouse), this protein is DNA-directed RNA polymerase III subunit RPC4.